Consider the following 430-residue polypeptide: Adenylosuccinate synthetase (430 aa).

GTP contacts are provided by residues 12 to 18 (GDEGKGK) and 40 to 42 (GHT). Aspartate 13 (proton acceptor) is an active-site residue. Mg(2+) contacts are provided by aspartate 13 and glycine 40. Residues 13 to 16 (DEGK), 38 to 41 (NAGH), threonine 128, arginine 142, glutamine 223, threonine 238, and arginine 302 each bind IMP. Histidine 41 (proton donor) is an active-site residue. Residue 298–304 (TTTGRPR) participates in substrate binding. GTP contacts are provided by residues arginine 304, 330-332 (SID), and 412-414 (SVG).

This sequence belongs to the adenylosuccinate synthetase family. Homodimer. Mg(2+) is required as a cofactor.

It localises to the cytoplasm. The catalysed reaction is IMP + L-aspartate + GTP = N(6)-(1,2-dicarboxyethyl)-AMP + GDP + phosphate + 2 H(+). It functions in the pathway purine metabolism; AMP biosynthesis via de novo pathway; AMP from IMP: step 1/2. Its function is as follows. Plays an important role in the de novo pathway of purine nucleotide biosynthesis. Catalyzes the first committed step in the biosynthesis of AMP from IMP. The polypeptide is Adenylosuccinate synthetase (Streptococcus gordonii (strain Challis / ATCC 35105 / BCRC 15272 / CH1 / DL1 / V288)).